Consider the following 1372-residue polypeptide: DNA-directed RNA polymerase subunit beta (1372 aa).

It belongs to the RNA polymerase beta chain family. The RNAP catalytic core consists of 2 alpha, 1 beta, 1 beta' and 1 omega subunit. When a sigma factor is associated with the core the holoenzyme is formed, which can initiate transcription.

The enzyme catalyses RNA(n) + a ribonucleoside 5'-triphosphate = RNA(n+1) + diphosphate. Functionally, DNA-dependent RNA polymerase catalyzes the transcription of DNA into RNA using the four ribonucleoside triphosphates as substrates. The chain is DNA-directed RNA polymerase subunit beta from Psychrobacter arcticus (strain DSM 17307 / VKM B-2377 / 273-4).